A 94-amino-acid chain; its full sequence is Co-chaperonin GroES (94 aa).

The protein belongs to the GroES chaperonin family. Heptamer of 7 subunits arranged in a ring. Interacts with the chaperonin GroEL.

Its subcellular location is the cytoplasm. Functionally, together with the chaperonin GroEL, plays an essential role in assisting protein folding. The GroEL-GroES system forms a nano-cage that allows encapsulation of the non-native substrate proteins and provides a physical environment optimized to promote and accelerate protein folding. GroES binds to the apical surface of the GroEL ring, thereby capping the opening of the GroEL channel. This chain is Co-chaperonin GroES, found in Exiguobacterium sp. (strain ATCC BAA-1283 / AT1b).